A 287-amino-acid polypeptide reads, in one-letter code: S-methyl-5'-thioadenosine phosphorylase (287 aa).

Residues Thr-13 and 55-56 (RH) contribute to the phosphate site. Position 186 (Met-186) interacts with substrate. Residue Thr-187 participates in phosphate binding. A substrate-binding site is contributed by 210–212 (DYD).

This sequence belongs to the PNP/MTAP phosphorylase family. MTAP subfamily. As to quaternary structure, homohexamer. Dimer of a homotrimer.

The enzyme catalyses S-methyl-5'-thioadenosine + phosphate = 5-(methylsulfanyl)-alpha-D-ribose 1-phosphate + adenine. Its pathway is amino-acid biosynthesis; L-methionine biosynthesis via salvage pathway; S-methyl-5-thio-alpha-D-ribose 1-phosphate from S-methyl-5'-thioadenosine (phosphorylase route): step 1/1. Its function is as follows. Catalyzes the reversible phosphorylation of S-methyl-5'-thioadenosine (MTA) to adenine and 5-methylthioribose-1-phosphate. Involved in the breakdown of MTA, a major by-product of polyamine biosynthesis. Responsible for the first step in the methionine salvage pathway after MTA has been generated from S-adenosylmethionine. Has broad substrate specificity with 6-aminopurine nucleosides as preferred substrates. This chain is S-methyl-5'-thioadenosine phosphorylase, found in Leptospira interrogans serogroup Icterohaemorrhagiae serovar copenhageni (strain Fiocruz L1-130).